An 86-amino-acid chain; its full sequence is Anti-adapter protein IraP (86 aa).

Residues 1–47 (MKNLIAELLLKLAQKEEESKELVAQVEALEIIVTAMLRNMAQSEQQM) are a coiled coil.

This sequence belongs to the IraP family. As to quaternary structure, interacts with RssB.

It is found in the cytoplasm. Its function is as follows. Inhibits RpoS proteolysis by regulating RssB activity, thereby increasing the stability of the sigma stress factor RpoS especially during phosphate and magnesium starvation, but also in stationary phase and during nitrogen starvation. Its effect on RpoS stability is due to its interaction with RssB, which probably blocks the interaction of RssB with RpoS, and the consequent delivery of the RssB-RpoS complex to the ClpXP protein degradation pathway. The polypeptide is Anti-adapter protein IraP (Salmonella arizonae (strain ATCC BAA-731 / CDC346-86 / RSK2980)).